Consider the following 303-residue polypeptide: Probable cell division protein WhiA (303 aa).

Residues 272–303 (SIQQVADALEFPITKSGVNHRLRKINKIADDL) constitute a DNA-binding region (H-T-H motif).

It belongs to the WhiA family.

In terms of biological role, involved in cell division and chromosome segregation. In Streptococcus pyogenes serotype M3 (strain ATCC BAA-595 / MGAS315), this protein is Probable cell division protein WhiA.